The following is a 580-amino-acid chain: Potassium-transporting ATPase potassium-binding subunit (580 aa).

Helical transmembrane passes span 3 to 23, 65 to 85, 136 to 156, 179 to 199, 263 to 283, 293 to 313, 399 to 419, 436 to 456, 504 to 524, and 546 to 566; these read ASGA…SVPL, DYAF…YALQ, GLGV…VALI, LYIL…QGVV, LSNF…CHTF, GWAV…ACVA, GLYG…LMVG, MASL…AIAV, AIGV…LALA, and LFVG…FVPA.

This sequence belongs to the KdpA family. In terms of assembly, the system is composed of three essential subunits: KdpA, KdpB and KdpC.

The protein resides in the cell inner membrane. In terms of biological role, part of the high-affinity ATP-driven potassium transport (or Kdp) system, which catalyzes the hydrolysis of ATP coupled with the electrogenic transport of potassium into the cytoplasm. This subunit binds the periplasmic potassium ions and delivers the ions to the membrane domain of KdpB through an intramembrane tunnel. The polypeptide is Potassium-transporting ATPase potassium-binding subunit (Sorangium cellulosum (strain So ce56) (Polyangium cellulosum (strain So ce56))).